The following is a 207-amino-acid chain: Ribosomal RNA small subunit methyltransferase G (207 aa).

S-adenosyl-L-methionine contacts are provided by residues glycine 73, leucine 78, valine 124–glutamate 125, and arginine 139.

It belongs to the methyltransferase superfamily. RNA methyltransferase RsmG family.

It is found in the cytoplasm. The catalysed reaction is guanosine(527) in 16S rRNA + S-adenosyl-L-methionine = N(7)-methylguanosine(527) in 16S rRNA + S-adenosyl-L-homocysteine. Its function is as follows. Specifically methylates the N7 position of guanine in position 527 of 16S rRNA. The chain is Ribosomal RNA small subunit methyltransferase G from Salmonella schwarzengrund (strain CVM19633).